We begin with the raw amino-acid sequence, 156 residues long: Small ribosomal subunit protein uS7c (156 aa).

Belongs to the universal ribosomal protein uS7 family. Part of the 30S ribosomal subunit.

It is found in the plastid. The protein resides in the chloroplast. In terms of biological role, one of the primary rRNA binding proteins, it binds directly to 16S rRNA where it nucleates assembly of the head domain of the 30S subunit. The polypeptide is Small ribosomal subunit protein uS7c (rps7) (Phaeodactylum tricornutum (strain CCAP 1055/1)).